The chain runs to 459 residues: Spermatogenesis-associated protein 1 (459 aa).

The span at 193–205 (LKELPNKNQEEAG) shows a compositional bias: basic and acidic residues. The disordered stretch occupies residues 193–213 (LKELPNKNQEEAGGKATAEKS). Coiled-coil stretches lie at residues 287 to 374 (TDIS…YKKL) and 400 to 453 (LIIQ…KKII).

As to quaternary structure, interacts with IFT20.

It localises to the cytoplasmic vesicle. The protein resides in the secretory vesicle. The protein localises to the acrosome. In Homo sapiens (Human), this protein is Spermatogenesis-associated protein 1 (SPATA1).